The following is a 180-amino-acid chain: UPF0398 protein EF_1150 (180 aa).

It belongs to the UPF0398 family.

The sequence is that of UPF0398 protein EF_1150 from Enterococcus faecalis (strain ATCC 700802 / V583).